We begin with the raw amino-acid sequence, 119 residues long: Holo-[acyl-carrier-protein] synthase (119 aa).

Mg(2+) contacts are provided by Asp-5 and Glu-51.

The protein belongs to the P-Pant transferase superfamily. AcpS family. It depends on Mg(2+) as a cofactor.

The protein localises to the cytoplasm. The enzyme catalyses apo-[ACP] + CoA = holo-[ACP] + adenosine 3',5'-bisphosphate + H(+). In terms of biological role, transfers the 4'-phosphopantetheine moiety from coenzyme A to a Ser of acyl-carrier-protein. This chain is Holo-[acyl-carrier-protein] synthase, found in Helicobacter pylori (strain ATCC 700392 / 26695) (Campylobacter pylori).